A 113-amino-acid chain; its full sequence is UPF0122 protein LAF_1235 (113 aa).

Belongs to the UPF0122 family.

In terms of biological role, might take part in the signal recognition particle (SRP) pathway. This is inferred from the conservation of its genetic proximity to ftsY/ffh. May be a regulatory protein. The sequence is that of UPF0122 protein LAF_1235 from Limosilactobacillus fermentum (strain NBRC 3956 / LMG 18251) (Lactobacillus fermentum).